Consider the following 97-residue polypeptide: Large ribosomal subunit protein uL23 (97 aa).

The protein belongs to the universal ribosomal protein uL23 family. In terms of assembly, part of the 50S ribosomal subunit. Contacts protein L29, and trigger factor when it is bound to the ribosome.

In terms of biological role, one of the early assembly proteins it binds 23S rRNA. One of the proteins that surrounds the polypeptide exit tunnel on the outside of the ribosome. Forms the main docking site for trigger factor binding to the ribosome. This is Large ribosomal subunit protein uL23 from Acidithiobacillus ferrooxidans (strain ATCC 23270 / DSM 14882 / CIP 104768 / NCIMB 8455) (Ferrobacillus ferrooxidans (strain ATCC 23270)).